A 398-amino-acid chain; its full sequence is Arylacetamide deacetylase (398 aa).

At 1–5 the chain is on the cytoplasmic side; sequence MGRTI. The helical; Signal-anchor for type II membrane protein transmembrane segment at 6–26 threads the bilayer; the sequence is FLLISVVLVAYYIYIPLPDDI. At 27–398 the chain is on the lumenal side; that stretch reads EEPWKIILGN…QYLNWLHKNL (372 aa). The N-linked (GlcNAc...) asparagine glycan is linked to N77. The short motif at 110-112 is the Involved in the stabilization of the negatively charged intermediate by the formation of the oxyanion hole element; sequence HGG. C115 and C339 are oxidised to a cystine. S188 is an active-site residue. N-linked (GlcNAc...) asparagine glycans are attached at residues N192, N281, and N324. Active-site residues include D342 and H372.

The protein belongs to the 'GDXG' lipolytic enzyme family. In terms of tissue distribution, highest levels in liver with lower levels in jejunum, kidney and testis.

Its subcellular location is the endoplasmic reticulum membrane. It localises to the microsome membrane. The catalysed reaction is a triacylglycerol + H2O = a diacylglycerol + a fatty acid + H(+). In terms of biological role, displays cellular triglyceride lipase activity in liver, increases the levels of intracellular fatty acids derived from the hydrolysis of newly formed triglyceride stores and plays a role in very low-density lipoprotein assembly. Displays serine esterase activity in liver. Deacetylates a variety of arylacetamide substrates, including xenobiotic compounds and procarcinogens, converting them to the primary arylamide compounds and increasing their toxicity. The chain is Arylacetamide deacetylase (Aadac) from Rattus norvegicus (Rat).